Consider the following 289-residue polypeptide: uncharacterized protein (289 aa).

This is an uncharacterized protein from Escherichia coli (strain K12).